The primary structure comprises 553 residues: Urocanate hydratase (553 aa).

Residues 51-52 (GG), Q129, 175-177 (GMG), E195, R200, 241-242 (NA), 262-266 (QTSAH), 272-273 (YL), and Y321 each bind NAD(+). Residue C409 is part of the active site. G491 contacts NAD(+).

Belongs to the urocanase family. NAD(+) is required as a cofactor.

It localises to the cytoplasm. The enzyme catalyses 4-imidazolone-5-propanoate = trans-urocanate + H2O. It functions in the pathway amino-acid degradation; L-histidine degradation into L-glutamate; N-formimidoyl-L-glutamate from L-histidine: step 2/3. Catalyzes the conversion of urocanate to 4-imidazolone-5-propionate. In Sphingopyxis alaskensis (strain DSM 13593 / LMG 18877 / RB2256) (Sphingomonas alaskensis), this protein is Urocanate hydratase.